We begin with the raw amino-acid sequence, 591 residues long: General transcription and DNA repair factor IIH subunit TFB1-1 (591 aa).

2 BSD domains span residues 112–166 (STSS…GKDS) and 191–243 (RTNR…YLYS).

The protein belongs to the TFB1 family. As to quaternary structure, component of the 7-subunit TFIIH core complex composed of XPB, XPD, TFB1/GTF2H1, GTF2H2/P44, TFB4/GTF2H3, TFB2/GTF2H4 and TFB5/GTF2H5, which is active in NER. The core complex associates with the 3-subunit CDK-activating kinase (CAK) module composed of CYCH1/cyclin H1, CDKD and MAT1/At4g30820 to form the 10-subunit holoenzyme (holo-TFIIH) active in transcription.

The protein localises to the nucleus. In terms of biological role, component of the general transcription and DNA repair factor IIH (TFIIH) core complex, which is involved in general and transcription-coupled nucleotide excision repair (NER) of damaged DNA and, when complexed to CAK, in RNA transcription by RNA polymerase II. In NER, TFIIH acts by opening DNA around the lesion to allow the excision of the damaged oligonucleotide and its replacement by a new DNA fragment. In transcription, TFIIH has an essential role in transcription initiation. When the pre-initiation complex (PIC) has been established, TFIIH is required for promoter opening and promoter escape. Phosphorylation of the C-terminal tail (CTD) of the largest subunit of RNA polymerase II by the kinase module CAK controls the initiation of transcription. This Arabidopsis thaliana (Mouse-ear cress) protein is General transcription and DNA repair factor IIH subunit TFB1-1.